The sequence spans 473 residues: Photosystem II CP43 reaction center protein (473 aa).

The propeptide occupies 1 to 14 (MKTLYSLRRFYPVE). The residue at position 15 (Thr15) is an N-acetylthreonine. Position 15 is a phosphothreonine (Thr15). 5 consecutive transmembrane segments (helical) span residues 69–93 (LFEV…PHLA), 134–155 (LLGP…KDRN), 178–200 (KALY…RKIT), 255–275 (KPFA…LSYS), and 291–312 (WFNN…ASQA). Glu367 contributes to the [CaMn4O5] cluster binding site. Residues 447–471 (RARAAAAGFEKGIDRDLEPVLSMTP) traverse the membrane as a helical segment.

This sequence belongs to the PsbB/PsbC family. PsbC subfamily. As to quaternary structure, PSII is composed of 1 copy each of membrane proteins PsbA, PsbB, PsbC, PsbD, PsbE, PsbF, PsbH, PsbI, PsbJ, PsbK, PsbL, PsbM, PsbT, PsbX, PsbY, PsbZ, Psb30/Ycf12, at least 3 peripheral proteins of the oxygen-evolving complex and a large number of cofactors. It forms dimeric complexes. The cofactor is Binds multiple chlorophylls and provides some of the ligands for the Ca-4Mn-5O cluster of the oxygen-evolving complex. It may also provide a ligand for a Cl- that is required for oxygen evolution. PSII binds additional chlorophylls, carotenoids and specific lipids..

Its subcellular location is the plastid. The protein resides in the chloroplast thylakoid membrane. One of the components of the core complex of photosystem II (PSII). It binds chlorophyll and helps catalyze the primary light-induced photochemical processes of PSII. PSII is a light-driven water:plastoquinone oxidoreductase, using light energy to abstract electrons from H(2)O, generating O(2) and a proton gradient subsequently used for ATP formation. The sequence is that of Photosystem II CP43 reaction center protein from Acorus calamus var. americanus (American sweet flag).